A 253-amino-acid polypeptide reads, in one-letter code: Polyprenal reductase (253 aa).

The next 4 helical transmembrane spans lie at 18 to 38 (LSFF…PEFL), 78 to 98 (FLSL…IIFG), 123 to 143 (HYLV…ISLY), and 200 to 220 (IIYS…VWVI).

The protein belongs to the steroid 5-alpha reductase family. Polyprenal reductase subfamily.

Its subcellular location is the endoplasmic reticulum membrane. It catalyses the reaction a di-trans,poly-cis-dolichal + NADP(+) = a di-trans,poly-cis-polyprenal + NADPH + H(+). It functions in the pathway protein modification; protein glycosylation. Its function is as follows. Plays a key role in early steps of protein N-linked glycosylation by being involved in the conversion of polyprenol into dolichol. Acts as a polyprenal reductase that mediates the reduction of polyprenal into dolichal in a NADP-dependent mechanism. Dolichols are required for the synthesis of dolichol-linked monosaccharides and the oligosaccharide precursor used for N-glycosylation. This chain is Polyprenal reductase, found in Saccharomyces cerevisiae (strain ATCC 204508 / S288c) (Baker's yeast).